We begin with the raw amino-acid sequence, 90 residues long: Long neurotoxin 1 (90 aa).

Positions 1-21 (MKTLLLTLVVVTIVCLDVGNS) are cleaved as a signal peptide. 5 disulfide bridges follow: Cys-24–Cys-42, Cys-35–Cys-63, Cys-48–Cys-52, Cys-67–Cys-78, and Cys-79–Cys-84.

The protein belongs to the three-finger toxin family. Long-chain subfamily. Type II alpha-neurotoxin sub-subfamily. As to expression, expressed by the venom gland.

It localises to the secreted. In terms of biological role, binds with high affinity to muscular (alpha-1/CHRNA1) and neuronal (alpha-7/CHRNA7) nicotinic acetylcholine receptor (nAChR) and inhibits acetylcholine from binding to the receptor, thereby impairing neuromuscular and neuronal transmission. This Austrelaps superbus (Lowland copperhead snake) protein is Long neurotoxin 1.